The sequence spans 165 residues: Cyclic pyranopterin monophosphate synthase (165 aa).

Substrate is bound by residues 78–80 (LCH) and 116–117 (ME). Aspartate 131 is a catalytic residue.

The protein belongs to the MoaC family. As to quaternary structure, homohexamer; trimer of dimers.

The catalysed reaction is (8S)-3',8-cyclo-7,8-dihydroguanosine 5'-triphosphate = cyclic pyranopterin phosphate + diphosphate. Its pathway is cofactor biosynthesis; molybdopterin biosynthesis. Functionally, catalyzes the conversion of (8S)-3',8-cyclo-7,8-dihydroguanosine 5'-triphosphate to cyclic pyranopterin monophosphate (cPMP). This is Cyclic pyranopterin monophosphate synthase from Sinorhizobium fredii (strain NBRC 101917 / NGR234).